The primary structure comprises 529 residues: MASEGGSVRHVIVVGAGPGGLSAAINLAGQGFRVTVVEKDAVPGGRMKGLTLGASGEYAVDTGPSILQLPGVLEQIFRRAARRLEDYVKLLPLDVNTRVHFWDGTHLDTTRHLDRMEAELAKFGPRQASALRQWMEDGREKYGIAYQKFICTSADNLGYYAPWRLAPTLRFKPWQTLYRQLDGFFHDDRVTYALAYPSKYLGLHPTTCSSVFSVIPFLELAFGVWHVEGGFRELSRGMMRCARDLGATFRMGTPVEKVRVDAGRAVGVKLVGGEVLDADAVVVNADLAYAARSLIPAEAREGSRLTDAALERAKYSCSTFMAYYGLDTVYADLPHHLIYLSESARRTDRDALEDRHVDLEDPPFYVCNPGVTDPSGAPAGHSTLYVLVPTPNTGRPVDWVKTEQALRERIPAMLEKVGLKGVREHIREERYFTAETWRDDFNVFRGAVFNLSHTWLQLGPLRPKVKNRDIEGLYFVGGGTHPGSGLLTIMESANIAADYLTREAGKGPLPGWPYVPPLEPESPVQARAG.

12–45 contacts FAD; that stretch reads IVVGAGPGGLSAAINLAGQGFRVTVVEKDAVPGG.

The protein belongs to the carotenoid/retinoid oxidoreductase family. FAD serves as cofactor.

It carries out the reaction all-trans-zeta-carotene + 2 A = all-trans-lycopene + 2 AH2. It participates in carotenoid biosynthesis; lycopene biosynthesis. Functionally, dehydrogenates carotenes in the trans conformation: converts all-trans-zeta-carotene into all-trans-lycopene, one of the last dehydrogenation steps of lycopene biosynthesis. This Myxococcus xanthus protein is All-trans-zeta-carotene desaturase (carC).